The following is a 203-amino-acid chain: uncharacterized protein (203 aa).

3 consecutive transmembrane segments (helical) span residues 60–80 (IIDM…FFLY), 114–134 (WFQL…YFCT), and 157–177 (LQLG…ALIL). 192-199 (GAMSEGKT) is an ATP binding site.

Its subcellular location is the membrane. This is an uncharacterized protein from Saccharomyces cerevisiae (strain ATCC 204508 / S288c) (Baker's yeast).